The sequence spans 360 residues: Cyclin-dependent kinase 10 (360 aa).

Positions 39 to 323 (FEKLNRIGEG…AGDCLESSYF (285 aa)) constitute a Protein kinase domain. ATP is bound by residues 45 to 53 (IGEGTYGIV) and K68. D163 acts as the Proton acceptor in catalysis. T196 bears the Phosphothreonine mark. Residues 334–360 (LMPTFPHHRNKRAAPATSEGQSKRCKP) form a disordered region.

Belongs to the protein kinase superfamily. CMGC Ser/Thr protein kinase family. CDC2/CDKX subfamily. As to quaternary structure, heterodimer with CCNQ, the interaction is required for kinase activity. Interacts with ETS2. Interacts with PRK2.

The protein localises to the cytoplasm. It is found in the cytoskeleton. The protein resides in the cilium basal body. The enzyme catalyses L-seryl-[protein] + ATP = O-phospho-L-seryl-[protein] + ADP + H(+). The catalysed reaction is L-threonyl-[protein] + ATP = O-phospho-L-threonyl-[protein] + ADP + H(+). Functionally, cyclin-dependent kinase that phosphorylates the transcription factor ETS2 (in vitro) and positively controls its proteasomal degradation (in cells). Involved in the regulation of actin cytoskeleton organization through the phosphorylation of actin dynamics regulators such as PKN2. Is a negative regulator of ciliogenesis through phosphorylation of PKN2 and promotion of RhoA signaling. The sequence is that of Cyclin-dependent kinase 10 (CDK10) from Homo sapiens (Human).